The following is a 317-amino-acid chain: Transaldolase (317 aa).

Lys-126 (schiff-base intermediate with substrate) is an active-site residue.

This sequence belongs to the transaldolase family. Type 1 subfamily. In terms of assembly, homodimer.

It localises to the cytoplasm. The catalysed reaction is D-sedoheptulose 7-phosphate + D-glyceraldehyde 3-phosphate = D-erythrose 4-phosphate + beta-D-fructose 6-phosphate. The protein operates within carbohydrate degradation; pentose phosphate pathway; D-glyceraldehyde 3-phosphate and beta-D-fructose 6-phosphate from D-ribose 5-phosphate and D-xylulose 5-phosphate (non-oxidative stage): step 2/3. Transaldolase is important for the balance of metabolites in the pentose-phosphate pathway. The sequence is that of Transaldolase from Burkholderia pseudomallei (strain 1710b).